A 72-amino-acid chain; its full sequence is Small, acid-soluble spore protein C (72 aa).

Belongs to the alpha/beta-type SASP family.

SASP are bound to spore DNA. They are double-stranded DNA-binding proteins that cause DNA to change to an a-like conformation. They protect the DNA backbone from chemical and enzymatic cleavage and are thus involved in dormant spore's high resistance to UV light. The chain is Small, acid-soluble spore protein C (sasP-C) from Priestia megaterium (Bacillus megaterium).